Reading from the N-terminus, the 245-residue chain is Exosome complex component RRP41 (245 aa).

Position 2 is an N-acetylalanine (Ala-2).

Belongs to the RNase PH family. As to quaternary structure, component of the RNA exosome core complex (Exo-9), composed of EXOSC1, EXOSC2, EXOSC3, EXOSC4, EXOSC5, EXOSC6, EXOSC7, EXOSC8 and EXOSC9; within the complex interacts with EXOSC2, EXOSC7 and EXOSC9. The catalytically inactive RNA exosome core complex (Exo-9) associates with the catalytic subunit EXOSC10/RRP6. Exo-9 may associate with DIS3 to form the nucleolar exosome complex, or DIS3L to form the cytoplasmic exosome complex. Exo-9 is formed by a hexameric base ring consisting of the heterodimers EXOSC4-EXOSC9, EXOSC5-EXOSC8 and EXOSC6-EXOSC7, and a cap ring consisting of EXOSC1, EXOSC2 and EXOSC3. The RNA exosome complex associates with cofactors C1D/RRP47, MPHOSPH6/MPP6 and MTREX/MTR4. Interacts with DDX60. Interacts with DIS3; the interaction is direct.

The protein localises to the cytoplasm. It localises to the nucleus. The protein resides in the nucleolus. Its subcellular location is the nucleoplasm. In terms of biological role, non-catalytic component of the RNA exosome complex which has 3'-&gt;5' exoribonuclease activity and participates in a multitude of cellular RNA processing and degradation events. In the nucleus, the RNA exosome complex is involved in proper maturation of stable RNA species such as rRNA, snRNA and snoRNA, in the elimination of RNA processing by-products and non-coding 'pervasive' transcripts, such as antisense RNA species and promoter-upstream transcripts (PROMPTs), and of mRNAs with processing defects, thereby limiting or excluding their export to the cytoplasm. The RNA exosome may be involved in Ig class switch recombination (CSR) and/or Ig variable region somatic hypermutation (SHM) by targeting AICDA deamination activity to transcribed dsDNA substrates. In the cytoplasm, the RNA exosome complex is involved in general mRNA turnover and specifically degrades inherently unstable mRNAs containing AU-rich elements (AREs) within their 3' untranslated regions, and in RNA surveillance pathways, preventing translation of aberrant mRNAs. It seems to be involved in degradation of histone mRNA. The catalytic inactive RNA exosome core complex of 9 subunits (Exo-9) is proposed to play a pivotal role in the binding and presentation of RNA for ribonucleolysis, and to serve as a scaffold for the association with catalytic subunits and accessory proteins or complexes. EXOSC4 binds to ARE-containing RNAs. The sequence is that of Exosome complex component RRP41 (Exosc4) from Mus musculus (Mouse).